A 351-amino-acid polypeptide reads, in one-letter code: Ferredoxin--NADP reductase (351 aa).

Positions 44, 52, 57, 97, 132, 296, and 337 each coordinate FAD.

The protein belongs to the ferredoxin--NADP reductase type 2 family. As to quaternary structure, homodimer. Requires FAD as cofactor.

It catalyses the reaction 2 reduced [2Fe-2S]-[ferredoxin] + NADP(+) + H(+) = 2 oxidized [2Fe-2S]-[ferredoxin] + NADPH. The protein is Ferredoxin--NADP reductase of Paraburkholderia phymatum (strain DSM 17167 / CIP 108236 / LMG 21445 / STM815) (Burkholderia phymatum).